A 267-amino-acid polypeptide reads, in one-letter code: Collectin-11 (267 aa).

The N-terminal stretch at Met-1–Ala-21 is a signal peptide. The segment at Gly-40–Cys-109 is disordered. 2 stretches are compositionally biased toward basic and acidic residues: residues Asp-41–Ala-50 and Glu-62–Gln-71. Residues Gly-49–Pro-108 form the Collagen-like domain. Residues Glu-110–Glu-144 are a coiled coil. Positions Thr-145–Glu-261 constitute a C-type lectin domain. 2 disulfide bridges follow: Cys-166–Cys-260 and Cys-238–Cys-252. Position 196 (Arg-196) interacts with a carbohydrate. Ca(2+) is bound by residues Asp-203, Glu-207, Glu-228, Asn-230, Asn-231, Asp-234, Glu-236, and Asp-237. Glu-236 is a binding site for a carbohydrate. Residues Glu-240 and Asn-248 to Val-250 contribute to the a carbohydrate site. 2 residues coordinate Ca(2+): Asn-248 and Asp-249.

It belongs to the COLEC10/COLEC11 family. In terms of assembly, homotrimer; disulfide-linked. Interacts with MASP1; probably triggers the lectin pathway of complement.

Its subcellular location is the secreted. Its function is as follows. Lectin that plays a role in innate immunity, apoptosis and embryogenesis. Calcium-dependent lectin that binds self and non-self glycoproteins presenting high mannose oligosaccharides with at least one terminal alpha-1,2-linked mannose epitope. Primarily recognizes the terminal disaccharide of the glycan. Also recognizes a subset of fucosylated glycans and lipopolysaccharides. Plays a role in innate immunity through its ability to bind non-self sugars presented by microorganisms and to activate the complement through the recruitment of MAPS1. Also plays a role in apoptosis through its ability to bind in a calcium-independent manner the DNA present at the surface of apoptotic cells and to activate the complement in response to this binding. Finally, plays a role in development, probably serving as a guidance cue during the migration of neural crest cells and other cell types during embryogenesis. This is Collectin-11 (COLEC11) from Bos taurus (Bovine).